A 236-amino-acid chain; its full sequence is Small ribosomal subunit protein uS2c (236 aa).

Belongs to the universal ribosomal protein uS2 family.

The protein resides in the plastid. It localises to the chloroplast. This Crucihimalaya wallichii (Rock-cress) protein is Small ribosomal subunit protein uS2c (rps2).